The sequence spans 436 residues: ATP-dependent protease ATPase subunit HslU (436 aa).

ATP-binding positions include Ile18, 60–65, Asp249, Glu314, and Arg386; that span reads GVGKTE.

This sequence belongs to the ClpX chaperone family. HslU subfamily. As to quaternary structure, a double ring-shaped homohexamer of HslV is capped on each side by a ring-shaped HslU homohexamer. The assembly of the HslU/HslV complex is dependent on binding of ATP.

It localises to the cytoplasm. ATPase subunit of a proteasome-like degradation complex; this subunit has chaperone activity. The binding of ATP and its subsequent hydrolysis by HslU are essential for unfolding of protein substrates subsequently hydrolyzed by HslV. HslU recognizes the N-terminal part of its protein substrates and unfolds these before they are guided to HslV for hydrolysis. In Chelativorans sp. (strain BNC1), this protein is ATP-dependent protease ATPase subunit HslU.